A 104-amino-acid polypeptide reads, in one-letter code: Protein MHF2 homolog (104 aa).

This sequence belongs to the CENP-X/MHF2 family.

The protein resides in the nucleus. Functionally, acts in the same pathway as FANCM to restrain class II meiotic crossing over (CO), and acts with FANCM during meiosis to repair interstrand cross-links (ICLs). In Arabidopsis thaliana (Mouse-ear cress), this protein is Protein MHF2 homolog.